A 252-amino-acid chain; its full sequence is Expansin-A12 (252 aa).

Positions 1 to 23 are cleaved as a signal peptide; the sequence is MDMKGTYLVTVILLVSTLSVGMC. In terms of domain architecture, Expansin-like EG45 spans 45 to 156; it reads GGACGYDNPY…RRVGCKRRGG (112 aa). The Expansin-like CBD domain maps to 166 to 246; the sequence is NFNMVMISNV…SWWFGQTFSS (81 aa).

The protein belongs to the expansin family. Expansin A subfamily.

The protein resides in the secreted. It is found in the cell wall. It localises to the membrane. Its function is as follows. Causes loosening and extension of plant cell walls by disrupting non-covalent bonding between cellulose microfibrils and matrix glucans. No enzymatic activity has been found. The polypeptide is Expansin-A12 (EXPA12) (Arabidopsis thaliana (Mouse-ear cress)).